Reading from the N-terminus, the 372-residue chain is Putative 26S proteasome regulatory subunit homolog MTBMA_c13930 (372 aa).

Residue 164–171 (GSPGTGKT) participates in ATP binding.

The protein belongs to the AAA ATPase family.

The 26S proteasome is involved in the ATP-dependent degradation of ubiquitinated proteins. The regulatory (or ATPase) complex confers ATP dependency and substrate specificity to the 26S complex. In Methanothermobacter marburgensis (strain ATCC BAA-927 / DSM 2133 / JCM 14651 / NBRC 100331 / OCM 82 / Marburg) (Methanobacterium thermoautotrophicum), this protein is Putative 26S proteasome regulatory subunit homolog MTBMA_c13930.